We begin with the raw amino-acid sequence, 643 residues long: NAD-dependent malic enzyme, mitochondrial (643 aa).

A mitochondrion-targeting transit peptide spans 1–38 (PRVRSFIAHQSGITSVIRRSPDIAHRMVRSLSVSSQRN). Positions 116, 119, and 143 each coordinate fumarate. The active-site Proton donor is Tyr-164. Arg-219 is a binding site for (S)-malate. Arg-219 provides a ligand contact to NAD(+). Catalysis depends on Lys-237, which acts as the Proton acceptor. Glu-309 and Asp-310 together coordinate a divalent metal cation. NAD(+) is bound by residues Asn-313, Asp-333, Ala-366, Ala-369, and Asn-472. Asp-333 lines the a divalent metal cation pocket. 2 residues coordinate (S)-malate: Asn-472 and Asn-516.

This sequence belongs to the malic enzymes family. As to quaternary structure, homotetramer. The cofactor is Mg(2+). Requires Mn(2+) as cofactor.

It localises to the mitochondrion matrix. The catalysed reaction is (S)-malate + NAD(+) = pyruvate + CO2 + NADH. It catalyses the reaction oxaloacetate + H(+) = pyruvate + CO2. Its activity is regulated as follows. Subject to allosteric activation by fumarate. In terms of biological role, NAD-dependent mitochondrial malic enzyme that catalyzes the oxidative decarboxylation of malate to pyruvate. The sequence is that of NAD-dependent malic enzyme, mitochondrial from Ascaris suum (Pig roundworm).